The primary structure comprises 258 residues: tRNA (guanine-N(7)-)-methyltransferase (258 aa).

Residues Gly76, 99-100 (EI), 132-133 (NA), and Leu152 each bind S-adenosyl-L-methionine. The active site involves Asp155. Residue 230 to 232 (TEE) coordinates S-adenosyl-L-methionine.

Belongs to the class I-like SAM-binding methyltransferase superfamily. TrmB family.

The protein resides in the nucleus. It catalyses the reaction guanosine(46) in tRNA + S-adenosyl-L-methionine = N(7)-methylguanosine(46) in tRNA + S-adenosyl-L-homocysteine. It functions in the pathway tRNA modification; N(7)-methylguanine-tRNA biosynthesis. In terms of biological role, catalyzes the formation of N(7)-methylguanine at position 46 (m7G46) in tRNA. The polypeptide is tRNA (guanine-N(7)-)-methyltransferase (Brugia malayi (Filarial nematode worm)).